The chain runs to 1567 residues: ABC multidrug transporter MDR1 (1567 aa).

Positions 1–11 (MASQPPQPPSG) are enriched in pro residues. A disordered region spans residues 1-37 (MASQPPQPPSGQPDTQYEEYQSEVITETTNRPTPAAD). Residues 22–32 (SEVITETTNRP) show a composition bias toward polar residues. Residues N149, N157, and N356 are each glycosylated (N-linked (GlcNAc...) asparagine). The ABC transporter 1 domain occupies 167-432 (VQYQDTFLSP…FEEMGWYCPP (266 aa)). The next 6 helical transmembrane spans lie at 543–563 (STIA…SLFF), 571–591 (GFFA…LMSI), 636–656 (IPIK…LGGL), 661–681 (AKFF…SAIF), 691–711 (IPQA…YTGF), and 798–818 (LGIL…VSEL). N-linked (GlcNAc...) asparagine glycans are attached at residues N819, N895, and N912. The ABC transporter 2 domain maps to 891–1134 (FTWRNVTYDI…LLNYFETHGA (244 aa)). 927–934 (GVSGAGKT) is an ATP binding site. The interval 1172–1202 (ESRHVQQELDRIQSETSKRNEGHGQSAEKEP) is disordered. Residues 1231 to 1251 (IWGKLLLGLTSALFIGFSFFL) form a helical membrane-spanning segment. N-linked (GlcNAc...) asparagine glycosylation is present at N1253. The next 5 helical transmembrane spans lie at 1257-1277 (AGLQ…SSLV), 1305-1325 (VFLL…GIIA), 1345-1365 (ILLL…QMII), 1372-1392 (ETAG…NGVL), and 1498-1518 (GIGW…YYLI).

This sequence belongs to the ABC transporter superfamily. ABCG family. PDR (TC 3.A.1.205) subfamily.

It localises to the cell membrane. The catalysed reaction is voriconazole(in) + ATP + H2O = voriconazole(out) + ADP + phosphate + H(+). It catalyses the reaction fluconazole(in) + ATP + H2O = fluconazole(out) + ADP + phosphate + H(+). It carries out the reaction (R)-miconazole(in) + ATP + H2O = (R)-miconazole(out) + ADP + phosphate + H(+). The enzyme catalyses (S)-miconazole(in) + ATP + H2O = (S)-miconazole(out) + ADP + phosphate + H(+). Pleiotropic ABC efflux transporter that may be involved in the modulation susceptibility to a wide range of unrelated cytotoxic compounds. This Trichophyton tonsurans (strain CBS 112818) (Scalp ringworm fungus) protein is ABC multidrug transporter MDR1.